A 453-amino-acid chain; its full sequence is Bifunctional protein GlmU (453 aa).

Positions 1–226 (MKFSAVILAA…AIEVEGVNDR (226 aa)) are pyrophosphorylase. Residues 8–11 (LAAG), lysine 22, glutamine 73, 78–79 (GT), 100–102 (YGD), glycine 137, glutamate 151, asparagine 166, and asparagine 224 contribute to the UDP-N-acetyl-alpha-D-glucosamine site. Aspartate 102 is a Mg(2+) binding site. Asparagine 224 is a binding site for Mg(2+). Positions 227–247 (AQLARLERAFQSMQAQKLLEQ) are linker. Positions 248 to 453 (GVMLRDPARF…TGWQRPVKQK (206 aa)) are N-acetyltransferase. The UDP-N-acetyl-alpha-D-glucosamine site is built by arginine 330 and lysine 348. Residue histidine 360 is the Proton acceptor of the active site. Tyrosine 363 and asparagine 374 together coordinate UDP-N-acetyl-alpha-D-glucosamine. Residues alanine 377, 383-384 (NY), serine 402, alanine 420, and arginine 437 each bind acetyl-CoA.

In the N-terminal section; belongs to the N-acetylglucosamine-1-phosphate uridyltransferase family. The protein in the C-terminal section; belongs to the transferase hexapeptide repeat family. In terms of assembly, homotrimer. Mg(2+) serves as cofactor.

It is found in the cytoplasm. It catalyses the reaction alpha-D-glucosamine 1-phosphate + acetyl-CoA = N-acetyl-alpha-D-glucosamine 1-phosphate + CoA + H(+). The catalysed reaction is N-acetyl-alpha-D-glucosamine 1-phosphate + UTP + H(+) = UDP-N-acetyl-alpha-D-glucosamine + diphosphate. It functions in the pathway nucleotide-sugar biosynthesis; UDP-N-acetyl-alpha-D-glucosamine biosynthesis; N-acetyl-alpha-D-glucosamine 1-phosphate from alpha-D-glucosamine 6-phosphate (route II): step 2/2. Its pathway is nucleotide-sugar biosynthesis; UDP-N-acetyl-alpha-D-glucosamine biosynthesis; UDP-N-acetyl-alpha-D-glucosamine from N-acetyl-alpha-D-glucosamine 1-phosphate: step 1/1. It participates in bacterial outer membrane biogenesis; LPS lipid A biosynthesis. Catalyzes the last two sequential reactions in the de novo biosynthetic pathway for UDP-N-acetylglucosamine (UDP-GlcNAc). The C-terminal domain catalyzes the transfer of acetyl group from acetyl coenzyme A to glucosamine-1-phosphate (GlcN-1-P) to produce N-acetylglucosamine-1-phosphate (GlcNAc-1-P), which is converted into UDP-GlcNAc by the transfer of uridine 5-monophosphate (from uridine 5-triphosphate), a reaction catalyzed by the N-terminal domain. The sequence is that of Bifunctional protein GlmU from Vibrio parahaemolyticus serotype O3:K6 (strain RIMD 2210633).